A 305-amino-acid chain; its full sequence is Olfactory receptor 9G9 (305 aa).

The Extracellular portion of the chain corresponds to 1–27; that stretch reads MQRSNHTVTEFILLGFTTDPGMQLGLF. N-linked (GlcNAc...) asparagine glycosylation is present at asparagine 5. A helical transmembrane segment spans residues 28-48; that stretch reads VVFLGVYSLTVVGNSTLIVLI. Residues 49 to 64 are Cytoplasmic-facing; it reads CNDSHLHTPMYFVVGN. Residues 65–85 form a helical membrane-spanning segment; the sequence is LSFLDLWYSSVYTPKILVICI. Residues 86-96 are Extracellular-facing; the sequence is SEDKSISFAGC. The cysteines at positions 96 and 178 are disulfide-linked. The chain crosses the membrane as a helical span at residues 97–117; that stretch reads LCQFFFSAGLAYSECCLLAAM. At 118–138 the chain is on the cytoplasmic side; it reads AYDRYVAISKPLLYAQAMSIK. The helical transmembrane segment at 139-159 threads the bilayer; sequence LCALLVAVSYCGGFINSSIIT. At 160-200 the chain is on the extracellular side; it reads KKTFSFNFCCENIIDDFFCDLLPLVKLACGEKGCYKFLMYF. The chain crosses the membrane as a helical span at residues 201 to 221; the sequence is LLASNVICPAVLILASYLFII. Residues 222 to 239 are Cytoplasmic-facing; that stretch reads TSVLRISSSQGRLKAFST. The chain crosses the membrane as a helical span at residues 240–260; it reads CSSHLTSVTLYYGSILYIYAL. At 261 to 271 the chain is on the extracellular side; sequence PRSSYSFDMDK. Residues 272–291 traverse the membrane as a helical segment; it reads IVSTFYTEVLPMLNPMIYSL. The Cytoplasmic segment spans residues 292–305; the sequence is RNKDVKEALKKLLP.

Belongs to the G-protein coupled receptor 1 family.

It localises to the cell membrane. Its function is as follows. Odorant receptor. The protein is Olfactory receptor 9G9 (OR9G9) of Homo sapiens (Human).